Consider the following 266-residue polypeptide: Hydroxyethylthiazole kinase (266 aa).

Residue Met41 participates in substrate binding. ATP-binding residues include Arg117 and Ser163. Ala190 is a binding site for substrate.

It belongs to the Thz kinase family. The cofactor is Mg(2+).

The catalysed reaction is 5-(2-hydroxyethyl)-4-methylthiazole + ATP = 4-methyl-5-(2-phosphooxyethyl)-thiazole + ADP + H(+). It functions in the pathway cofactor biosynthesis; thiamine diphosphate biosynthesis; 4-methyl-5-(2-phosphoethyl)-thiazole from 5-(2-hydroxyethyl)-4-methylthiazole: step 1/1. Catalyzes the phosphorylation of the hydroxyl group of 4-methyl-5-beta-hydroxyethylthiazole (THZ). The sequence is that of Hydroxyethylthiazole kinase from Histophilus somni (strain 129Pt) (Haemophilus somnus).